We begin with the raw amino-acid sequence, 201 residues long: Small ribosomal subunit protein uS2 (201 aa).

This sequence belongs to the universal ribosomal protein uS2 family. In terms of assembly, part of the 50S ribosomal subunit.

The sequence is that of Small ribosomal subunit protein uS2 from Thermococcus kodakarensis (strain ATCC BAA-918 / JCM 12380 / KOD1) (Pyrococcus kodakaraensis (strain KOD1)).